A 501-amino-acid polypeptide reads, in one-letter code: L-arabinose isomerase (501 aa).

Mn(2+) is bound by residues Glu306, Glu333, His350, and His450.

It belongs to the arabinose isomerase family. Homohexamer. Requires Mn(2+) as cofactor.

It catalyses the reaction beta-L-arabinopyranose = L-ribulose. It functions in the pathway carbohydrate degradation; L-arabinose degradation via L-ribulose; D-xylulose 5-phosphate from L-arabinose (bacterial route): step 1/3. In terms of biological role, catalyzes the conversion of L-arabinose to L-ribulose. This is L-arabinose isomerase from Erwinia tasmaniensis (strain DSM 17950 / CFBP 7177 / CIP 109463 / NCPPB 4357 / Et1/99).